A 347-amino-acid polypeptide reads, in one-letter code: Heat-inducible transcription repressor HrcA (347 aa).

The protein belongs to the HrcA family.

In terms of biological role, negative regulator of class I heat shock genes (grpE-dnaK-dnaJ and groELS operons). Prevents heat-shock induction of these operons. In Sphingopyxis alaskensis (strain DSM 13593 / LMG 18877 / RB2256) (Sphingomonas alaskensis), this protein is Heat-inducible transcription repressor HrcA.